The following is a 60-amino-acid chain: Large ribosomal subunit protein bL32 (60 aa).

The segment at 1 to 60 is disordered; the sequence is MAVQQNKKTPSKRGMHRSHDFLVAPQLSVEQTTGETHMRHHISPNGFYRGRKVLKTKNDE. Basic residues predominate over residues 49 to 60; that stretch reads RGRKVLKTKNDE.

It belongs to the bacterial ribosomal protein bL32 family.

The protein is Large ribosomal subunit protein bL32 of Herminiimonas arsenicoxydans.